We begin with the raw amino-acid sequence, 1148 residues long: Envelopment polyprotein (1148 aa).

The N-terminal stretch at 1–23 is a signal peptide; sequence MGELSPVCLYLLLQGLLLCNTGA. Topologically, residues 24-495 are lumenal; sequence ARNLNELKME…VPGLHGWATM (472 aa). Disulfide bonds link C34–C159, C68–C165, C117–C136, C141–C146, C183–C193, and C218–C257. N142 carries N-linked (GlcNAc...) asparagine; by host glycosylation. N357 is a glycosylation site (N-linked (GlcNAc...) asparagine; by host). Intrachain disulfides connect C386–C445, C390–C399, C415–C434, and C462–C485. N-linked (GlcNAc...) asparagine; by host glycosylation occurs at N409. The helical transmembrane segment at 496-516 threads the bilayer; the sequence is LLLLTFCFGWVLIPTITMILL. The Cytoplasmic segment spans residues 517 to 637; sequence KILIAFAYLC…LSLFRYRSRF (121 aa). Positions 526–543 are binding to the ribonucleoprotein; that stretch reads CSKYNTDSKFRILIEKVK. 2 CCHC-type zinc fingers span residues 555-575 and 580-601; these read CEVC…RKSC and CPYC…FKVC. 3 binding to the ribonucleoprotein regions span residues 598-615, 602-613, and 621-635; these read FKVC…RKSL, KLRSRFQENLRK, and MQGC…RYRS. Residues 621 to 644 enclose the ITAM domain; that stretch reads MQGCYRTLSLFRYRSRFFVGLVWC. Positions 625 to 628 match the YxxL motif; that stretch reads YRTL. A helical membrane pass occupies residues 638-658; sequence FVGLVWCVLLVHHLIVWAASA. Over 659–1114 the chain is Lumenal; sequence ETQNLNAGWT…EWILGVLNGN (456 aa). Disulfide bonds link C745-C780, C749-C787, C761-C894, C775-C905, C790-C913, C816-C825, C833-C842, and C873-C877. The interval 767–787 is fusion loop; it reads YEYETGWGCNPPDCPGVGTGC. A glycan (N-linked (GlcNAc...) asparagine; by host) is linked at N937. Intrachain disulfides connect C979–C1009, C1002–C1054, C1019–C1024, C1055–C1060, and C1094–C1098. Residues 1115-1135 traverse the membrane as a helical segment; that stretch reads WMVVAVLVVLLILSILLFTLC. Binding to the ribonucleoprotein stretches follow at residues 1131 to 1143 and 1131 to 1148; these read LFTL…PSYR and LFTL…EHKP. The Cytoplasmic segment spans residues 1136–1148; the sequence is CPRRPSYRKEHKP.

It belongs to the hantavirus envelope glycoprotein family. As to quaternary structure, homodimer. Homotetramer; forms heterotetrameric Gn-Gc spikes in the pre-fusion conformation. Interacts (via C-terminus) with the nucleoprotein. Interacts with host TUFM; this interaction contributes to the virus-induced degradation of mitochondria by autophagy, which leads to degradation of host MAVS and inhibition of type I interferon (IFN) responses. Interacts with host MAP1LC3B; this interaction contributes to the virus-induced degradation of mitochondria by autophagy, which leads to degradation of host MAVS and inhibition of type I interferon (IFN) responses. In terms of assembly, homodimer. Homotetramer; forms heterotetrameric Gn-Gc spikes in the pre-fusion conformation. Homotrimer; forms homotrimer in the post-fusion conformation at acidic pH. Interacts (via C-terminus) with the nucleoprotein. In terms of processing, envelope polyprotein precursor is quickly cleaved in vivo just after synthesis, presumably by host signal peptidase.

It localises to the virion membrane. The protein localises to the host cell surface. It is found in the host Golgi apparatus membrane. Its subcellular location is the host endoplasmic reticulum membrane. The protein resides in the host mitochondrion. Its function is as follows. Forms homotetramers with glycoprotein C at the surface of the virion. Attaches the virion to host cell receptors including integrin ITGAV/ITGB3. This attachment induces virion internalization predominantly through clathrin-dependent endocytosis. Mediates the assembly and budding of infectious virus particles through its interaction with the nucleocapsid protein and the viral genome. May dysregulate normal immune and endothelial cell responses through an ITAM motif. Translocates to mitochondria, binds to host TUFM and recruits MAP1LC3B. These interactions induce mitochondrial autophagy and therefore destruction of host MAVS leading to inhibition of type I interferon (IFN) responses. Concomitant breakdown of glycoprotein N is apparently prevented by the nucleoprotein that may inhibit Gn-stimulated autophagosome-lysosome fusion. Interacts with the viral genomic RNA. Functionally, forms homotetramers with glycoprotein N at the surface of the virion. Attaches the virion to host cell receptors including integrin ITGAV/ITGB3. This attachment induces virion internalization predominantly through clathrin-dependent endocytosis. Class II fusion protein that promotes fusion of viral membrane with host endosomal membrane after endocytosis of the virion. The polypeptide is Envelopment polyprotein (GP) (Homo sapiens (Human)).